We begin with the raw amino-acid sequence, 211 residues long: Large ribosomal subunit protein uL3 (211 aa).

It belongs to the universal ribosomal protein uL3 family. Part of the 50S ribosomal subunit. Forms a cluster with proteins L14 and L19.

Its function is as follows. One of the primary rRNA binding proteins, it binds directly near the 3'-end of the 23S rRNA, where it nucleates assembly of the 50S subunit. This Trichlorobacter lovleyi (strain ATCC BAA-1151 / DSM 17278 / SZ) (Geobacter lovleyi) protein is Large ribosomal subunit protein uL3.